We begin with the raw amino-acid sequence, 460 residues long: tRNA modification GTPase MnmE (460 aa).

(6S)-5-formyl-5,6,7,8-tetrahydrofolate contacts are provided by arginine 29, glutamate 86, and lysine 126. Positions 222 to 383 (GMRVVIAGRP…LAEHLKECMG (162 aa)) constitute a TrmE-type G domain. Asparagine 232 is a K(+) binding site. Residues 232-237 (NAGKSS), 251-257 (TAIAGTT), 276-279 (DTAG), and 341-344 (NKAD) each bind GTP. A Mg(2+)-binding site is contributed by serine 236. K(+) contacts are provided by threonine 251, isoleucine 253, and threonine 256. Threonine 257 contacts Mg(2+). Lysine 460 is a (6S)-5-formyl-5,6,7,8-tetrahydrofolate binding site.

This sequence belongs to the TRAFAC class TrmE-Era-EngA-EngB-Septin-like GTPase superfamily. TrmE GTPase family. As to quaternary structure, homodimer. Heterotetramer of two MnmE and two MnmG subunits. K(+) serves as cofactor.

It localises to the cytoplasm. In terms of biological role, exhibits a very high intrinsic GTPase hydrolysis rate. Involved in the addition of a carboxymethylaminomethyl (cmnm) group at the wobble position (U34) of certain tRNAs, forming tRNA-cmnm(5)s(2)U34. This chain is tRNA modification GTPase MnmE, found in Pseudoalteromonas atlantica (strain T6c / ATCC BAA-1087).